Consider the following 351-residue polypeptide: Ribosomal RNA large subunit methyltransferase M (351 aa).

S-adenosyl-L-methionine contacts are provided by residues S183, 216–219, D235, D255, and D271; that span reads APGG. K300 acts as the Proton acceptor in catalysis.

This sequence belongs to the class I-like SAM-binding methyltransferase superfamily. RNA methyltransferase RlmE family. RlmM subfamily. In terms of assembly, monomer.

The protein resides in the cytoplasm. The catalysed reaction is cytidine(2498) in 23S rRNA + S-adenosyl-L-methionine = 2'-O-methylcytidine(2498) in 23S rRNA + S-adenosyl-L-homocysteine + H(+). Catalyzes the 2'-O-methylation at nucleotide C2498 in 23S rRNA. This Ectopseudomonas mendocina (strain ymp) (Pseudomonas mendocina) protein is Ribosomal RNA large subunit methyltransferase M.